The sequence spans 155 residues: Small ribosomal subunit protein uS7c (155 aa).

Belongs to the universal ribosomal protein uS7 family. In terms of assembly, part of the 30S ribosomal subunit.

The protein resides in the plastid. It localises to the chloroplast. One of the primary rRNA binding proteins, it binds directly to 16S rRNA where it nucleates assembly of the head domain of the 30S subunit. This Spirogyra maxima (Green alga) protein is Small ribosomal subunit protein uS7c (rps7).